Reading from the N-terminus, the 431-residue chain is UDP-N-acetylmuramate--L-alanine ligase (431 aa).

Gly108–Ser114 serves as a coordination point for ATP.

It belongs to the MurCDEF family.

It is found in the cytoplasm. It carries out the reaction UDP-N-acetyl-alpha-D-muramate + L-alanine + ATP = UDP-N-acetyl-alpha-D-muramoyl-L-alanine + ADP + phosphate + H(+). Its pathway is cell wall biogenesis; peptidoglycan biosynthesis. Its function is as follows. Cell wall formation. The polypeptide is UDP-N-acetylmuramate--L-alanine ligase (Exiguobacterium sibiricum (strain DSM 17290 / CCUG 55495 / CIP 109462 / JCM 13490 / 255-15)).